We begin with the raw amino-acid sequence, 102 residues long: Small ribosomal subunit protein uS10 (102 aa).

This sequence belongs to the universal ribosomal protein uS10 family. In terms of assembly, part of the 30S ribosomal subunit.

In terms of biological role, involved in the binding of tRNA to the ribosomes. The sequence is that of Small ribosomal subunit protein uS10 from Akkermansia muciniphila (strain ATCC BAA-835 / DSM 22959 / JCM 33894 / BCRC 81048 / CCUG 64013 / CIP 107961 / Muc).